We begin with the raw amino-acid sequence, 201 residues long: Probable nicotinate-nucleotide adenylyltransferase (201 aa).

It belongs to the NadD family.

It carries out the reaction nicotinate beta-D-ribonucleotide + ATP + H(+) = deamido-NAD(+) + diphosphate. It participates in cofactor biosynthesis; NAD(+) biosynthesis; deamido-NAD(+) from nicotinate D-ribonucleotide: step 1/1. Functionally, catalyzes the reversible adenylation of nicotinate mononucleotide (NaMN) to nicotinic acid adenine dinucleotide (NaAD). This is Probable nicotinate-nucleotide adenylyltransferase from Neisseria gonorrhoeae (strain ATCC 700825 / FA 1090).